Consider the following 86-residue polypeptide: Putative membrane protein insertion efficiency factor (86 aa).

The protein belongs to the UPF0161 family.

It is found in the cell membrane. Could be involved in insertion of integral membrane proteins into the membrane. This is Putative membrane protein insertion efficiency factor from Streptococcus pyogenes serotype M1.